The following is a 1171-amino-acid chain: 7,8-linoleate diol synthase (1171 aa).

The segment covering 1 to 22 (MASSSSSGSSTRSSSPSDPPSS) has biased composition (low complexity). The segment at 1–56 (MASSSSSGSSTRSSSPSDPPSSFFQKLGAFLGLFSKPQPPRPDYPHAPGNSAREEQ) is disordered. The interval 114 to 457 (TDGLITGLWE…DGSFEDEGLI (344 aa)) is fatty acid alpha-dioxygenase. His213 lines the heme b pocket. Asp214, Ser229, Tyr231, Asp233, and Ser235 together coordinate Ca(2+). The active site involves Tyr385. His388 is a heme b binding site. An epoxy alcohol synthase region spans residues 675–1171 (KILNNQKDFK…PMNMKIRWDD (497 aa)). The segment at 873 to 900 (GLANGGANGHANGNANGHTNGNGIHQNG) is disordered. Residues 881–895 (GHANGNANGHTNGNG) show a composition bias toward low complexity. Position 1089 (Cys1089) interacts with heme.

This sequence in the N-terminal section; belongs to the peroxidase family. It in the C-terminal section; belongs to the cytochrome P450 family. Homotetramer. Heme b is required as a cofactor. The cofactor is Ca(2+). It depends on heme as a cofactor.

It catalyses the reaction (9Z,12Z)-octadecadienoate + O2 = (8R,9Z,12Z)-8-hydroperoxyoctadeca-9,12-dienoate. The catalysed reaction is (8R,9Z,12Z)-8-hydroperoxyoctadeca-9,12-dienoate = (7S,8S,9Z,12Z)-7,8-dihydroxyoctadeca-9,12-dienoate. In terms of biological role, 7,8-linoleate diol synthase is a bifunctional enzyme that converts linoleic acid (18:2n-6) into 8-hydroperoxy-8(E),12(Z)-octadecadienoic acid (8-HPODE) and then catalyzes the isomerization of the resulting hydroperoxide to 7,8-dihydroxy-9(Z),12(Z)-octadecadienoic acid (7,8-DiHODE). The protein is 7,8-linoleate diol synthase of Pyricularia oryzae (strain 70-15 / ATCC MYA-4617 / FGSC 8958) (Rice blast fungus).